Reading from the N-terminus, the 694-residue chain is Elongation factor G (694 aa).

The tr-type G domain maps to 8–287; sequence EDYRNFGIMA…AVVEFLPAPT (280 aa). GTP contacts are provided by residues 17–24, 86–90, and 140–143; these read AHIDAGKT, DTPGH, and NKMD.

It belongs to the TRAFAC class translation factor GTPase superfamily. Classic translation factor GTPase family. EF-G/EF-2 subfamily.

It is found in the cytoplasm. Functionally, catalyzes the GTP-dependent ribosomal translocation step during translation elongation. During this step, the ribosome changes from the pre-translocational (PRE) to the post-translocational (POST) state as the newly formed A-site-bound peptidyl-tRNA and P-site-bound deacylated tRNA move to the P and E sites, respectively. Catalyzes the coordinated movement of the two tRNA molecules, the mRNA and conformational changes in the ribosome. The polypeptide is Elongation factor G (Brucella abortus (strain S19)).